Consider the following 498-residue polypeptide: Glycerol kinase (498 aa).

T12 serves as a coordination point for ADP. The ATP site is built by T12, T13, and S14. T12 lines the sn-glycerol 3-phosphate pocket. R16 provides a ligand contact to ADP. 4 residues coordinate sn-glycerol 3-phosphate: R82, E83, Y134, and D243. R82, E83, Y134, D243, and Q244 together coordinate glycerol. 2 residues coordinate ADP: T265 and G308. T265, G308, Q312, and G409 together coordinate ATP. Residues G409 and N413 each contribute to the ADP site.

This sequence belongs to the FGGY kinase family. Homotetramer and homodimer (in equilibrium).

It carries out the reaction glycerol + ATP = sn-glycerol 3-phosphate + ADP + H(+). Its pathway is polyol metabolism; glycerol degradation via glycerol kinase pathway; sn-glycerol 3-phosphate from glycerol: step 1/1. Its activity is regulated as follows. Activated by phosphorylation and inhibited by fructose 1,6-bisphosphate (FBP). Its function is as follows. Key enzyme in the regulation of glycerol uptake and metabolism. Catalyzes the phosphorylation of glycerol to yield sn-glycerol 3-phosphate. The protein is Glycerol kinase of Agathobacter rectalis (strain ATCC 33656 / DSM 3377 / JCM 17463 / KCTC 5835 / VPI 0990) (Eubacterium rectale).